Here is a 238-residue protein sequence, read N- to C-terminus: Orotidine 5'-phosphate decarboxylase (238 aa).

Residues Asp-10, Lys-32, 59–68 (DLKLHDIPNT), Thr-122, Arg-184, Gln-193, Gly-213, and Arg-214 contribute to the substrate site. The active-site Proton donor is the Lys-61.

This sequence belongs to the OMP decarboxylase family. Type 1 subfamily. Homodimer.

The catalysed reaction is orotidine 5'-phosphate + H(+) = UMP + CO2. It functions in the pathway pyrimidine metabolism; UMP biosynthesis via de novo pathway; UMP from orotate: step 2/2. In terms of biological role, catalyzes the decarboxylation of orotidine 5'-monophosphate (OMP) to uridine 5'-monophosphate (UMP). In Bacillus cereus (strain B4264), this protein is Orotidine 5'-phosphate decarboxylase.